The chain runs to 245 residues: Malonyl-[acyl-carrier protein] O-methyltransferase (245 aa).

Belongs to the methyltransferase superfamily.

It carries out the reaction malonyl-[ACP] + S-adenosyl-L-methionine = malonyl-[ACP] methyl ester + S-adenosyl-L-homocysteine. It functions in the pathway cofactor biosynthesis; biotin biosynthesis. Functionally, converts the free carboxyl group of a malonyl-thioester to its methyl ester by transfer of a methyl group from S-adenosyl-L-methionine (SAM). It allows to synthesize pimeloyl-ACP via the fatty acid synthetic pathway. This Calditerrivibrio nitroreducens (strain DSM 19672 / NBRC 101217 / Yu37-1) protein is Malonyl-[acyl-carrier protein] O-methyltransferase.